A 40-amino-acid polypeptide reads, in one-letter code: Photosystem II reaction center protein J (40 aa).

Residues 8 to 28 (IPLWLIGTVTGIPVIGSMGIF) traverse the membrane as a helical segment.

Belongs to the PsbJ family. As to quaternary structure, PSII is composed of 1 copy each of membrane proteins PsbA, PsbB, PsbC, PsbD, PsbE, PsbF, PsbH, PsbI, PsbJ, PsbK, PsbL, PsbM, PsbT, PsbX, PsbY, PsbZ, Psb30/Ycf12, at least 3 peripheral proteins of the oxygen-evolving complex and a large number of cofactors. It forms dimeric complexes.

The protein resides in the plastid. It is found in the chloroplast thylakoid membrane. Functionally, one of the components of the core complex of photosystem II (PSII). PSII is a light-driven water:plastoquinone oxidoreductase that uses light energy to abstract electrons from H(2)O, generating O(2) and a proton gradient subsequently used for ATP formation. It consists of a core antenna complex that captures photons, and an electron transfer chain that converts photonic excitation into a charge separation. The sequence is that of Photosystem II reaction center protein J from Illicium oligandrum (Star anise).